Reading from the N-terminus, the 504-residue chain is MQSYVLEMKGITKEFPGVRALDNVTFSVRKGEIHALCGENGAGKSTLMKVLSGVYPYGSYDGKIYIEGKEVRFRNIKESQEAGIAIIYQELAVVEEMTVAENLFLGHELMRGKYIDWNRLYSEAQKWLQKIGLDIDPETKVRNLTVGKQQLIEIAKALSKNAKIIILDEPTAALTDSDVATLKNILCDLRSQGVTCIYISHRLNEVMELADTVTVLRDGQTISTDRIELLTEEQIIAKMVGRELNELYPYEPRNVGKEILKVDHYSVIDEQTGREVIHDVSFSLKAGEILGISGLMGSGRTELFTSLFGAYHGKKKGTVWIDGKQVDIRRPAEAIQYGMAYVSEDRKKYGLVLEMDIIKNSTLVALKKVTKWNVIDHALEVKQAEEITKRMKLKAPTLEAKVSQLSGGNQQKVVLSKWLLNSPKILILDEPTRGIDVGAKYEIYKIINELASQGVGIVLISSELPEVMGMSDRILVMSEGRITGEFQRHEATQEKIMTCATGGK.

ABC transporter domains are found at residues 6–243 (LEMK…VGRE) and 260–504 (LKVD…TGGK). 38-45 (GENGAGKS) provides a ligand contact to ATP.

It belongs to the ABC transporter superfamily. Xylose importer (TC 3.A.1.2.4) family. As to quaternary structure, the complex is composed of two ATP-binding proteins (XylG), two transmembrane proteins (XylH) and a solute-binding protein (XylF).

It is found in the cell membrane. It catalyses the reaction D-xylose(out) + ATP + H2O = D-xylose(in) + ADP + phosphate + H(+). In terms of biological role, part of the ABC transporter complex XylFGH involved in xylose import. Responsible for energy coupling to the transport system. This Geobacillus kaustophilus (strain HTA426) protein is Xylose import ATP-binding protein XylG.